The primary structure comprises 188 residues: Protein SSX3 (188 aa).

A KRAB-related domain is found at 20–83; that stretch reads KIQKAFDDIA…KRVTDFQGND (64 aa). The tract at residues 113 to 162 is disordered; it reads PKKPAEEGNVSKEVPEASGPQNDGKQLCPPGKPTTSEKINMISGPKRGEH. Basic and acidic residues predominate over residues 115 to 127; that stretch reads KPAEEGNVSKEVP. Position 123 is a phosphoserine (Ser-123).

It belongs to the SSX family. Interacts with SSX2IP.

Functionally, could act as a modulator of transcription. This is Protein SSX3 (SSX3) from Homo sapiens (Human).